Here is a 361-residue protein sequence, read N- to C-terminus: Spermatogenesis-associated protein 17 (361 aa).

3 IQ domains span residues 32–61 (ENDA…IVTI), 55–84 (LNRI…VAYY), and 91–120 (YNAM…LKEY).

The protein localises to the cytoplasm. The chain is Spermatogenesis-associated protein 17 (SPATA17) from Homo sapiens (Human).